Reading from the N-terminus, the 181-residue chain is Adenine phosphoribosyltransferase (181 aa).

Belongs to the purine/pyrimidine phosphoribosyltransferase family. Homodimer.

The protein resides in the cytoplasm. It carries out the reaction AMP + diphosphate = 5-phospho-alpha-D-ribose 1-diphosphate + adenine. It participates in purine metabolism; AMP biosynthesis via salvage pathway; AMP from adenine: step 1/1. Catalyzes a salvage reaction resulting in the formation of AMP, that is energically less costly than de novo synthesis. The sequence is that of Adenine phosphoribosyltransferase from Vibrio parahaemolyticus serotype O3:K6 (strain RIMD 2210633).